Reading from the N-terminus, the 72-residue chain is Small proline-rich protein 2A (72 aa).

The span at 1-11 (MSYQQQQCKQP) shows a compositional bias: low complexity. The interval 1-20 (MSYQQQQCKQPCQPPPVCPT) is disordered. A run of 3 repeats spans residues 21 to 29 (PKCPEPCPP), 30 to 38 (PKCPEPCPP), and 39 to 47 (PKCPQPCPP). Residues 21–47 (PKCPEPCPPPKCPEPCPPPKCPQPCPP) are 3 X 9 AA tandem repeats of P-K-C-P-[EQ]-P-C-P-P. Residues 42 to 72 (PQPCPPQQCQQKYPPVTPSPPCQSKYPPKSK) are disordered.

The protein belongs to the cornifin (SPRR) family. Forms five pairs of intrachain disulfide bonds. In terms of tissue distribution, expressed in intestine; selectively expressed in goblet cells.

The protein localises to the secreted. It is found in the extracellular space. It localises to the cytoplasmic vesicle. The protein resides in the secretory vesicle. Gut bactericidal protein that selectively kills Gram-positive bacteria by binding to negatively charged lipids on bacterial membranes, leading to bacterial membrane permeabilization and disruption. Specifically binds lipids bearing negatively charged headgroups, such as phosphatidic acid, phosphatidylserine (PS), cardiolipin (CL), and phosphatidylinositol phosphates, but not to zwitterionic or neutral lipids. Induced by type-2 cytokines in response to helminth infection and is required to protect against helminth-induced bacterial invasion of intestinal tissue. May also be involved in the development of the cornified envelope of squamous epithelia; however, additional evidences are required to confirm this result in vivo. The chain is Small proline-rich protein 2A from Homo sapiens (Human).